A 207-amino-acid chain; its full sequence is Dephospho-CoA kinase (207 aa).

Residues 1-11 (MTRSPAPSSPT) are compositionally biased toward polar residues. Residues 1–21 (MTRSPAPSSPTHPRRLGLTGS) form a disordered region. The DPCK domain maps to 15–207 (RLGLTGSIGA…DAALRQLEIT (193 aa)). 23 to 28 (GAGKST) is a binding site for ATP.

It belongs to the CoaE family.

It is found in the cytoplasm. The enzyme catalyses 3'-dephospho-CoA + ATP = ADP + CoA + H(+). Its pathway is cofactor biosynthesis; coenzyme A biosynthesis; CoA from (R)-pantothenate: step 5/5. In terms of biological role, catalyzes the phosphorylation of the 3'-hydroxyl group of dephosphocoenzyme A to form coenzyme A. The chain is Dephospho-CoA kinase from Deinococcus radiodurans (strain ATCC 13939 / DSM 20539 / JCM 16871 / CCUG 27074 / LMG 4051 / NBRC 15346 / NCIMB 9279 / VKM B-1422 / R1).